The following is a 226-amino-acid chain: Ribonuclease 3 (226 aa).

The region spanning 6–128 is the RNase III domain; the sequence is INRLQRKLGY…LIGGVFLDSN (123 aa). Mg(2+) is bound at residue Glu-41. Asp-45 is an active-site residue. Residues Asp-114 and Glu-117 each coordinate Mg(2+). Glu-117 is a catalytic residue. A DRBM domain is found at 155 to 225; sequence DPKTRLQEYL…AEQVLKKLEL (71 aa).

This sequence belongs to the ribonuclease III family. As to quaternary structure, homodimer. Requires Mg(2+) as cofactor.

It is found in the cytoplasm. The enzyme catalyses Endonucleolytic cleavage to 5'-phosphomonoester.. Its function is as follows. Digests double-stranded RNA. Involved in the processing of primary rRNA transcript to yield the immediate precursors to the large and small rRNAs (23S and 16S). Processes some mRNAs, and tRNAs when they are encoded in the rRNA operon. Processes pre-crRNA and tracrRNA of type II CRISPR loci if present in the organism. This Salmonella choleraesuis (strain SC-B67) protein is Ribonuclease 3.